A 164-amino-acid polypeptide reads, in one-letter code: FMN reductase (NADH) RutF (164 aa).

It belongs to the non-flavoprotein flavin reductase family. RutF subfamily.

The catalysed reaction is FMNH2 + NAD(+) = FMN + NADH + 2 H(+). In terms of biological role, catalyzes the reduction of FMN to FMNH2 which is used to reduce pyrimidine by RutA via the Rut pathway. The polypeptide is FMN reductase (NADH) RutF (Escherichia coli O81 (strain ED1a)).